The primary structure comprises 181 residues: uncharacterized protein (181 aa).

Residues 151-181 are disordered; that stretch reads AQKKKDFQEPENKHEQLTSTKAPCQENWSDF. Basic and acidic residues predominate over residues 154–166; that stretch reads KKDFQEPENKHEQ. Residues 167–181 show a composition bias toward polar residues; the sequence is LTSTKAPCQENWSDF.

This is an uncharacterized protein from Caenorhabditis elegans.